Here is a 178-residue protein sequence, read N- to C-terminus: N-alpha-acetyltransferase 20 (178 aa).

Positions 2–157 (TSLRPFTCDD…DAYDMRKALS (156 aa)) constitute an N-acetyltransferase domain. Positions 159–178 (DTEKKSIVPLPHPVRPEDIE) are disordered.

The protein belongs to the acetyltransferase family. ARD1 subfamily. In terms of assembly, component of the N-terminal acetyltransferase B (NatB) complex which is composed of naa20 and naa25.

Its subcellular location is the cytoplasm. The protein resides in the nucleus. It carries out the reaction N-terminal L-methionyl-L-asparaginyl-[protein] + acetyl-CoA = N-terminal N(alpha)-acetyl-L-methionyl-L-asparaginyl-[protein] + CoA + H(+). It catalyses the reaction N-terminal L-methionyl-L-glutaminyl-[protein] + acetyl-CoA = N-terminal N(alpha)-acetyl-L-methionyl-L-glutaminyl-[protein] + CoA + H(+). The catalysed reaction is N-terminal L-methionyl-L-aspartyl-[protein] + acetyl-CoA = N-terminal N(alpha)-acetyl-L-methionyl-L-aspartyl-[protein] + CoA + H(+). The enzyme catalyses N-terminal L-methionyl-L-glutamyl-[protein] + acetyl-CoA = N-terminal N(alpha)-acetyl-L-methionyl-L-glutamyl-[protein] + CoA + H(+). Its function is as follows. Catalytic subunit of the NatB complex which catalyzes acetylation of the N-terminal methionine residues of peptides beginning with Met-Asp, Met-Glu, Met-Asn and Met-Gln. Proteins with cell cycle functions are overrepresented in the pool of NatB substrates. Required for maintaining the structure and function of actomyosin fibers and for proper cellular migration. This Xenopus tropicalis (Western clawed frog) protein is N-alpha-acetyltransferase 20 (naa20).